A 463-amino-acid polypeptide reads, in one-letter code: T-box transcription factor TBX1 (463 aa).

2 disordered regions span residues 39-58 (SPSP…PCSA) and 75-103 (GASS…PVKK). Positions 75–97 (GASSSSCASSTPGSGSTGSSGSS) are enriched in low complexity. A DNA-binding region (T-box) is located at residues 119–297 (LWDEFNQLGT…SNPFAKGFRD (179 aa)). Disordered stretches follow at residues 320 to 354 (RSRN…PLHG) and 367 to 405 (SPSL…LHHH). The segment covering 323 to 332 (NPVSSPPQNG) has biased composition (polar residues). Residues 333 to 347 (SDKDGDGRREYERDT) are compositionally biased toward basic and acidic residues. The segment covering 367–380 (SPSLPVPGGLVPLS) has biased composition (low complexity). A Nuclear localization signal motif is present at residues 420–431 (KTRPAPYPLPSI).

Binds DNA as a dimer. Interacts with dscr6/ripply3.

It localises to the nucleus. Probable transcriptional regulator involved in developmental processes. Binds to the palindromic T site 5'-TTCACACCTAGGTGTGAA-3' DNA sequence. Induces pre-placodal ectoderm (PPE) gene expression in regions where RIPPLY3 is absent. Plays a role in the formation of the anteroposterior (AP) axis during embryonic development; required to establish the posterolateral border of the pre-placodal ectoderm (PPE) acting downstream of the retinoic acid receptor (RAR) signaling. This chain is T-box transcription factor TBX1 (tbx1), found in Xenopus tropicalis (Western clawed frog).